The sequence spans 379 residues: Transaminase htyB (379 aa).

Arg-92 is a pyridoxal 5'-phosphate binding site. An N6-(pyridoxal phosphate)lysine modification is found at Lys-203. Residue Glu-239 participates in pyridoxal 5'-phosphate binding.

Belongs to the class-IV pyridoxal-phosphate-dependent aminotransferase family. Pyridoxal 5'-phosphate serves as cofactor.

Its pathway is antifungal biosynthesis. Its function is as follows. Transaminase; part of the gene cluster that mediates the de novo generation of L-homotyrosine from acetyl-CoA and 4-hydroxyphenyl-pyruvate. L-homotyrosine is a building block of echinocandin B, a fungal lipidated cyclic hexapeptide that acts as an antifungal agent. L-homotyrosine 4-hydroxyphenyl-pyruvate first undergoes an aldol-type condensation by htyA with the C-2 of acetyl-CoA followed by the release of CoA to form 2-(4-hydroxybenzyl)-malate. This is followed by isomerization of 2-(4-hydroxy-benzyl)-malate to 3-(4-hydroxybenzyl)-malate by htyD. Thereafter, 3-(4-hydroxybenzyl)-malate undergoes decarboxylation and oxidation to form 2-oxo-4-(4-hydroxybenzyl)butanoic acid, coupled to reduction of NAD(+) to NADH by htyC. The product then undergoes transamination catalyzed by htyB to form L-homotyrosine. The polypeptide is Transaminase htyB (Aspergillus rugulosus (Emericella rugulosa)).